A 57-amino-acid chain; its full sequence is uncharacterized protein (57 aa).

A helical membrane pass occupies residues 15 to 37 (GLAGLICIGLTISSGFSGSSILI).

Its subcellular location is the membrane. This is an uncharacterized protein from Dictyostelium discoideum (Social amoeba).